Here is a 588-residue protein sequence, read N- to C-terminus: Sulfite reductase [NADPH] hemoprotein beta-component (588 aa).

Basic and acidic residues predominate over residues 1–10 (MSDKKQKGLE). A disordered region spans residues 1-20 (MSDKKQKGLEWQDNPLSDNE). Residues Cys443, Cys449, Cys488, and Cys492 each contribute to the [4Fe-4S] cluster site. Siroheme is bound at residue Cys492.

Belongs to the nitrite and sulfite reductase 4Fe-4S domain family. Alpha(8)-beta(8). The alpha component is a flavoprotein, the beta component is a hemoprotein. Siroheme is required as a cofactor. It depends on [4Fe-4S] cluster as a cofactor.

It carries out the reaction hydrogen sulfide + 3 NADP(+) + 3 H2O = sulfite + 3 NADPH + 4 H(+). It functions in the pathway sulfur metabolism; hydrogen sulfide biosynthesis; hydrogen sulfide from sulfite (NADPH route): step 1/1. Its function is as follows. Component of the sulfite reductase complex that catalyzes the 6-electron reduction of sulfite to sulfide. This is one of several activities required for the biosynthesis of L-cysteine from sulfate. This is Sulfite reductase [NADPH] hemoprotein beta-component from Mannheimia succiniciproducens (strain KCTC 0769BP / MBEL55E).